The primary structure comprises 990 residues: Bacteriophage adsorption protein A (990 aa).

The signal sequence occupies residues 1-27 (MKENNLNRVIGWSGLLLTSLLSTSALA). TPR repeat units lie at residues 81–114 (IPLT…HPGD), 612–645 (ANAY…EPNN), and 646–679 (SNTQ…LPDD).

In terms of assembly, (Microbial infection) Interacts with N4 phage non-contractile sheath protein; this interaction is essential for viral adsorption to the host.

The protein resides in the cell outer membrane. In terms of biological role, (Microbial infection) Allows N4 phage attachment by binding to the viral non-contractile sheath protein. In Escherichia coli (strain K12), this protein is Bacteriophage adsorption protein A (nfrA).